Reading from the N-terminus, the 81-residue chain is Conotoxin ViKr92 (81 aa).

The first 22 residues, 1-22 (MKLTWMMIVAVLFLTAWTFVTA), serve as a signal peptide directing secretion. The propeptide occupies 23–51 (DDTRYKLENPFLKARNELQKLEASQLNER). Disulfide bonds link cysteine 53/cysteine 70, cysteine 60/cysteine 74, and cysteine 69/cysteine 78.

It belongs to the conotoxin O1 superfamily. As to expression, expressed by the venom duct.

The protein resides in the secreted. The chain is Conotoxin ViKr92 from Conus virgo (Virgin cone).